A 520-amino-acid polypeptide reads, in one-letter code: Ribonuclease Y (520 aa).

The chain crosses the membrane as a helical span at residues 1–21 (MDIITIIIAVIAGIGGGFGIS). In terms of domain architecture, KH spans 210 to 276 (CVSVFNIESD…RLALHKLVTD (67 aa)). In terms of domain architecture, HD spans 336 to 429 (LLQHSREVSK…VQVCDAISGA (94 aa)).

Belongs to the RNase Y family.

It is found in the cell membrane. In terms of biological role, endoribonuclease that initiates mRNA decay. The chain is Ribonuclease Y from Flavobacterium psychrophilum (strain ATCC 49511 / DSM 21280 / CIP 103535 / JIP02/86).